Here is a 214-residue protein sequence, read N- to C-terminus: Peroxiredoxin 2 (214 aa).

Positions 1–157 constitute a Thioredoxin domain; it reads MKLYQKFPET…LLRITKAMIV (157 aa). The active-site Cysteine sulfenic acid (-SOH) intermediate is the cysteine 45. Substrate is bound at residue arginine 120.

This sequence belongs to the peroxiredoxin family. Prx6 subfamily. Homodecamer. Pentamer of dimers that assemble into a ring structure.

It is found in the cytoplasm. The enzyme catalyses a hydroperoxide + [thioredoxin]-dithiol = an alcohol + [thioredoxin]-disulfide + H2O. In terms of biological role, thiol-specific peroxidase that catalyzes the reduction of hydrogen peroxide and organic hydroperoxides to water and alcohols, respectively. Plays a role in cell protection against oxidative stress by detoxifying peroxides. In Sulfuracidifex metallicus (Sulfolobus metallicus), this protein is Peroxiredoxin 2.